Reading from the N-terminus, the 439-residue chain is Elongation factor 1-alpha 2 (439 aa).

A tr-type G domain is found at 6–229 (KDHLNLVVIG…DEFKVPKRPI (224 aa)). A G1 region spans residues 15 to 22 (GHVDSGKS). 15-22 (GHVDSGKS) provides a ligand contact to GTP. Residues 71-75 (GITIN) form a G2 region. The G3 stretch occupies residues 92–95 (DAPG). GTP is bound by residues 92 to 96 (DAPGH) and 154 to 157 (NKMD). Residues 154-157 (NKMD) form a G4 region. The interval 193-195 (SGF) is G5.

It belongs to the TRAFAC class translation factor GTPase superfamily. Classic translation factor GTPase family. EF-Tu/EF-1A subfamily.

The protein resides in the cytoplasm. In terms of biological role, this protein promotes the GTP-dependent binding of aminoacyl-tRNA to the A-site of ribosomes during protein biosynthesis. In Euplotes crassus, this protein is Elongation factor 1-alpha 2 (EFA2).